A 378-amino-acid polypeptide reads, in one-letter code: Anhydro-N-acetylmuramic acid kinase (378 aa).

22 to 29 (GTSLDGAD) lines the ATP pocket.

The protein belongs to the anhydro-N-acetylmuramic acid kinase family.

It catalyses the reaction 1,6-anhydro-N-acetyl-beta-muramate + ATP + H2O = N-acetyl-D-muramate 6-phosphate + ADP + H(+). The protein operates within amino-sugar metabolism; 1,6-anhydro-N-acetylmuramate degradation. It participates in cell wall biogenesis; peptidoglycan recycling. In terms of biological role, catalyzes the specific phosphorylation of 1,6-anhydro-N-acetylmuramic acid (anhMurNAc) with the simultaneous cleavage of the 1,6-anhydro ring, generating MurNAc-6-P. Is required for the utilization of anhMurNAc either imported from the medium or derived from its own cell wall murein, and thus plays a role in cell wall recycling. This chain is Anhydro-N-acetylmuramic acid kinase, found in Bordetella petrii (strain ATCC BAA-461 / DSM 12804 / CCUG 43448).